A 259-amino-acid polypeptide reads, in one-letter code: Phosphatidylglycerol--prolipoprotein diacylglyceryl transferase (259 aa).

The next 4 helical transmembrane spans lie at 16-36, 55-75, 92-112, and 117-137; these read FAIS…WFYA, FITY…VLLY, QGGM…YLFC, and VNFL…LFLG. An a 1,2-diacyl-sn-glycero-3-phospho-(1'-sn-glycerol)-binding site is contributed by Arg138. Helical transmembrane passes span 172–192, 201–221, and 228–248; these read QLYE…YATF, ALNL…IEIF, and IGFI…MLIL.

Belongs to the Lgt family.

The protein localises to the cell inner membrane. It carries out the reaction L-cysteinyl-[prolipoprotein] + a 1,2-diacyl-sn-glycero-3-phospho-(1'-sn-glycerol) = an S-1,2-diacyl-sn-glyceryl-L-cysteinyl-[prolipoprotein] + sn-glycerol 1-phosphate + H(+). It functions in the pathway protein modification; lipoprotein biosynthesis (diacylglyceryl transfer). Functionally, catalyzes the transfer of the diacylglyceryl group from phosphatidylglycerol to the sulfhydryl group of the N-terminal cysteine of a prolipoprotein, the first step in the formation of mature lipoproteins. This Rickettsia canadensis (strain McKiel) protein is Phosphatidylglycerol--prolipoprotein diacylglyceryl transferase.